The primary structure comprises 96 residues: Aspartyl/glutamyl-tRNA(Asn/Gln) amidotransferase subunit C (96 aa).

The protein belongs to the GatC family. In terms of assembly, heterotrimer of A, B and C subunits.

The enzyme catalyses L-glutamyl-tRNA(Gln) + L-glutamine + ATP + H2O = L-glutaminyl-tRNA(Gln) + L-glutamate + ADP + phosphate + H(+). The catalysed reaction is L-aspartyl-tRNA(Asn) + L-glutamine + ATP + H2O = L-asparaginyl-tRNA(Asn) + L-glutamate + ADP + phosphate + 2 H(+). In terms of biological role, allows the formation of correctly charged Asn-tRNA(Asn) or Gln-tRNA(Gln) through the transamidation of misacylated Asp-tRNA(Asn) or Glu-tRNA(Gln) in organisms which lack either or both of asparaginyl-tRNA or glutaminyl-tRNA synthetases. The reaction takes place in the presence of glutamine and ATP through an activated phospho-Asp-tRNA(Asn) or phospho-Glu-tRNA(Gln). This is Aspartyl/glutamyl-tRNA(Asn/Gln) amidotransferase subunit C from Acaryochloris marina (strain MBIC 11017).